The chain runs to 239 residues: MNTKKEKIMLFKVYRWNPDKKEKPHISTYSVDLNSCGPMVLDALIKIKNEQDSTLTFRRSCREGVCGSCAMNIDGTNTLACIKSIDTNKKEMKIYPLPHMHIIKDLVPDLSNFYAQYKSIEPWMKTTEKKLDKEFYQSRNDREKLDGLYECVLCACCSTSCPSYWWNSDKYLGPAVLLQAYRWIVDSRDQGTRERLQYLEDPFKLYRCHTILNCTKTCPKHLNPAQAIAKIKQNITLLT.

The region spanning 11–100 (FKVYRWNPDK…EMKIYPLPHM (90 aa)) is the 2Fe-2S ferredoxin-type domain. Residues C61, C66, C69, and C81 each coordinate [2Fe-2S] cluster. A 4Fe-4S ferredoxin-type domain is found at 141–171 (DREKLDGLYECVLCACCSTSCPSYWWNSDKY). Residues C151, C154, and C157 each contribute to the [4Fe-4S] cluster site. C161 serves as a coordination point for [3Fe-4S] cluster. Residue W166 participates in a ubiquinone binding. [3Fe-4S] cluster-binding residues include C208 and C214. C218 is a binding site for [4Fe-4S] cluster.

It belongs to the succinate dehydrogenase/fumarate reductase iron-sulfur protein family. As to quaternary structure, component of complex II composed of four subunits: a flavoprotein (FP), an iron-sulfur protein (IP), and a cytochrome b composed of a large and a small subunit. [2Fe-2S] cluster is required as a cofactor. Requires [3Fe-4S] cluster as cofactor. The cofactor is [4Fe-4S] cluster.

It is found in the mitochondrion inner membrane. The catalysed reaction is a quinone + succinate = fumarate + a quinol. The protein operates within carbohydrate metabolism; tricarboxylic acid cycle; fumarate from succinate (eukaryal route): step 1/1. In terms of biological role, iron-sulfur protein (IP) subunit of succinate dehydrogenase (SDH) that is involved in complex II of the mitochondrial electron transport chain and is responsible for transferring electrons from succinate to ubiquinone (coenzyme Q). The protein is Succinate dehydrogenase [ubiquinone] iron-sulfur subunit (SDH2) of Reclinomonas americana.